The sequence spans 240 residues: ATP synthase subunit a (240 aa).

The next 5 helical transmembrane spans lie at 21–41 (LSNL…CVWG), 78–98 (IFLP…LIGV), 116–136 (DAVM…YYGI), 183–203 (ILLS…FGAA), and 212–232 (FSVF…MVYM).

Belongs to the ATPase A chain family. F-type ATPases have 2 components, CF(1) - the catalytic core - and CF(0) - the membrane proton channel. CF(1) has five subunits: alpha(3), beta(3), gamma(1), delta(1), epsilon(1). CF(0) has three main subunits: a(1), b(2) and c(9-12). The alpha and beta chains form an alternating ring which encloses part of the gamma chain. CF(1) is attached to CF(0) by a central stalk formed by the gamma and epsilon chains, while a peripheral stalk is formed by the delta and b chains.

The protein localises to the cell membrane. Key component of the proton channel; it plays a direct role in the translocation of protons across the membrane. This is ATP synthase subunit a from Oceanobacillus iheyensis (strain DSM 14371 / CIP 107618 / JCM 11309 / KCTC 3954 / HTE831).